Consider the following 397-residue polypeptide: Lysophospholipid transporter LplT (397 aa).

11 helical membrane passes run 21–41 (SAQF…LALL), 53–73 (ILQM…GQVA), 91–111 (LGAA…LVGI), 139–159 (LMES…GVLA), 164–184 (LAAL…NLFI), 229–249 (WGAG…ALGI), 257–277 (YLNA…AKLV), 281–301 (TVRR…FFSL), 304–324 (ALLP…FFIV), 344–364 (IAVQ…LYSL), and 372–392 (VVGI…GLWI).

The protein belongs to the major facilitator superfamily. LplT (TC 2.A.1.42) family.

The protein localises to the cell inner membrane. Its function is as follows. Catalyzes the facilitated diffusion of 2-acyl-glycero-3-phosphoethanolamine (2-acyl-GPE) into the cell. In Enterobacter sp. (strain 638), this protein is Lysophospholipid transporter LplT.